A 219-amino-acid chain; its full sequence is Ribose-5-phosphate isomerase A (219 aa).

Substrate contacts are provided by residues 29-32 (TGST), 82-85 (DGAD), and 95-98 (KGGG). Catalysis depends on glutamate 104, which acts as the Proton acceptor. Lysine 122 is a substrate binding site.

It belongs to the ribose 5-phosphate isomerase family. In terms of assembly, homodimer.

It carries out the reaction aldehydo-D-ribose 5-phosphate = D-ribulose 5-phosphate. It participates in carbohydrate degradation; pentose phosphate pathway; D-ribose 5-phosphate from D-ribulose 5-phosphate (non-oxidative stage): step 1/1. In terms of biological role, catalyzes the reversible conversion of ribose-5-phosphate to ribulose 5-phosphate. This chain is Ribose-5-phosphate isomerase A, found in Chromobacterium violaceum (strain ATCC 12472 / DSM 30191 / JCM 1249 / CCUG 213 / NBRC 12614 / NCIMB 9131 / NCTC 9757 / MK).